The chain runs to 579 residues: uncharacterized protein (579 aa).

Transmembrane regions (helical) follow at residues 20–40 (ALWA…VVAI), 54–74 (ATVV…MLVA), 86–106 (LYLI…LSSG), 142–162 (GVAL…GPLA), 174–194 (WIFF…AYLI), 204–224 (FDWF…FGLQ), 234–254 (WIWA…YWQA), 279–299 (IAII…YAQA), 310–330 (VLFA…GMII), 335–355 (PLCV…WLLC), 366–386 (LVLP…PLTV), and 467–487 (MLLP…LVDF). Positions 516–579 (REPEEDCDTQ…DTESTAPSAL (64 aa)) are disordered. The span at 526–540 (PLRASRPAAAAASRS) shows a compositional bias: low complexity. Residues 570–579 (DTESTAPSAL) show a composition bias toward polar residues.

The protein belongs to the major facilitator superfamily. EmrB family.

The protein localises to the cell membrane. This is an uncharacterized protein from Mycobacterium tuberculosis (strain ATCC 25618 / H37Rv).